The sequence spans 231 residues: Ion-translocating oxidoreductase complex subunit E (231 aa).

6 helical membrane-spanning segments follow: residues 18 to 38, 39 to 59, 63 to 83, 86 to 106, 125 to 145, and 182 to 202; these read ALVQ…ATNA, LGLG…ISTL, TPSE…VSAV, LINA…PLIV, ALSA…MFVL, and PFLL…MLAG.

It belongs to the NqrDE/RnfAE family. The complex is composed of six subunits: RsxA, RsxB, RsxC, RsxD, RsxE and RsxG.

The protein resides in the cell inner membrane. Its function is as follows. Part of a membrane-bound complex that couples electron transfer with translocation of ions across the membrane. Required to maintain the reduced state of SoxR. In Escherichia coli O6:K15:H31 (strain 536 / UPEC), this protein is Ion-translocating oxidoreductase complex subunit E.